An 871-amino-acid polypeptide reads, in one-letter code: Protein argonaute-2 (871 aa).

Residues 232–351 (PVIEFMCEVL…LPLEVCNIVA (120 aa)) enclose the PAZ domain. Interaction with guide RNA regions lie at residues 314 to 319 (YFKDRH) and 536 to 578 (GKTP…LCLK). The 302-residue stretch at 529–830 (LVVVILPGKT…VAFRARYHLV (302 aa)) folds into the Piwi domain. Residues 599-602 (FQQP) form an interaction with GW182 family members region. Asp-609 is a binding site for a divalent metal cation. The interval 662-672 (LIQFYKSTRFK) is interaction with GW182 family members. Asp-681 contacts a divalent metal cation. Interaction with guide RNA regions lie at residues 721-722 (KR), 765-773 (HAGIQGTSR), and 802-824 (YVRC…VAFR). His-819 contacts a divalent metal cation. The segment at 834–856 (HDSAEGSHTSGQSNGRDQQALAK) is disordered. Over residues 839-850 (GSHTSGQSNGRD) the composition is skewed to polar residues.

Belongs to the argonaute family. Ago subfamily. In terms of assembly, component of the RISC loading complex (RLC), or micro-RNA (miRNA) loading complex (miRLC), which is composed of dicer1, ago2 and tarbp2. Note that the trimeric RLC/miRLC is also referred to as RISC. Requires Mg(2+) as cofactor. Mn(2+) serves as cofactor.

It localises to the cytoplasm. It is found in the P-body. The catalysed reaction is Endonucleolytic cleavage to 5'-phosphomonoester.. In terms of biological role, required for RNA-mediated gene silencing (RNAi) by the RNA-induced silencing complex (RISC). The 'minimal RISC' appears to include ago2 bound to a short guide RNA such as a microRNA (miRNA) or short interfering RNA (siRNA). These guide RNAs direct RISC to complementary mRNAs that are targets for RISC-mediated gene silencing. The precise mechanism of gene silencing depends on the degree of complementarity between the miRNA or siRNA and its target. Binding of RISC to a perfectly complementary mRNA generally results in silencing due to endonucleolytic cleavage of the mRNA specifically by ago2. Binding of RISC to a partially complementary mRNA results in silencing through inhibition of translation, and this is independent of endonuclease activity. The inhibition of translational initiation leads to the accumulation of the affected mRNA in cytoplasmic processing bodies (P-bodies), where mRNA degradation may subsequently occur. In Xenopus tropicalis (Western clawed frog), this protein is Protein argonaute-2 (ago2).